The primary structure comprises 559 residues: Branched-chain-amino-acid aminotransferase-like protein 2 (559 aa).

Belongs to the class-IV pyridoxal-phosphate-dependent aminotransferase family.

In Arabidopsis thaliana (Mouse-ear cress), this protein is Branched-chain-amino-acid aminotransferase-like protein 2.